The chain runs to 656 residues: tRNA(Met) cytidine acetyltransferase TmcA (656 aa).

ATP-binding positions include glutamine 145, 167–176 (GRGKSALLGM), and arginine 291. The N-acetyltransferase domain maps to 368 to 542 (SEGKYNRQFF…SGCYSAIALK (175 aa)). Acetyl-CoA is bound by residues 474–476 (IAV), 481–487 (QQKGIGQ), and glutamate 510.

Belongs to the RNA cytidine acetyltransferase family. TmcA subfamily.

It is found in the cytoplasm. It catalyses the reaction cytidine(34) in elongator tRNA(Met) + acetyl-CoA + ATP + H2O = N(4)-acetylcytidine(34) in elongator tRNA(Met) + ADP + phosphate + CoA + H(+). In terms of biological role, catalyzes the formation of N(4)-acetylcytidine (ac(4)C) at the wobble position of tRNA(Met), by using acetyl-CoA as an acetyl donor and ATP (or GTP). This is tRNA(Met) cytidine acetyltransferase TmcA from Haemophilus influenzae (strain ATCC 51907 / DSM 11121 / KW20 / Rd).